We begin with the raw amino-acid sequence, 473 residues long: Siroheme synthase (473 aa).

The precorrin-2 dehydrogenase /sirohydrochlorin ferrochelatase stretch occupies residues 1-203 (MTLFPIFADL…QQPGLAEQEL (203 aa)). NAD(+) is bound by residues 22 to 23 (AV) and 43 to 44 (PR). Residue serine 128 is modified to Phosphoserine. Residues 216–473 (GSVVLVGAGP…GLPGPQALAA (258 aa)) are uroporphyrinogen-III C-methyltransferase. Proline 225 provides a ligand contact to S-adenosyl-L-methionine. The active-site Proton acceptor is aspartate 248. Residue lysine 270 is the Proton donor of the active site. Residues 302-304 (GGD), isoleucine 307, 332-333 (TA), methionine 384, and glycine 413 contribute to the S-adenosyl-L-methionine site.

This sequence in the N-terminal section; belongs to the precorrin-2 dehydrogenase / sirohydrochlorin ferrochelatase family. The protein in the C-terminal section; belongs to the precorrin methyltransferase family.

The enzyme catalyses uroporphyrinogen III + 2 S-adenosyl-L-methionine = precorrin-2 + 2 S-adenosyl-L-homocysteine + H(+). It carries out the reaction precorrin-2 + NAD(+) = sirohydrochlorin + NADH + 2 H(+). The catalysed reaction is siroheme + 2 H(+) = sirohydrochlorin + Fe(2+). It functions in the pathway cofactor biosynthesis; adenosylcobalamin biosynthesis; precorrin-2 from uroporphyrinogen III: step 1/1. Its pathway is cofactor biosynthesis; adenosylcobalamin biosynthesis; sirohydrochlorin from precorrin-2: step 1/1. The protein operates within porphyrin-containing compound metabolism; siroheme biosynthesis; precorrin-2 from uroporphyrinogen III: step 1/1. It participates in porphyrin-containing compound metabolism; siroheme biosynthesis; siroheme from sirohydrochlorin: step 1/1. It functions in the pathway porphyrin-containing compound metabolism; siroheme biosynthesis; sirohydrochlorin from precorrin-2: step 1/1. Its function is as follows. Multifunctional enzyme that catalyzes the SAM-dependent methylations of uroporphyrinogen III at position C-2 and C-7 to form precorrin-2 via precorrin-1. Then it catalyzes the NAD-dependent ring dehydrogenation of precorrin-2 to yield sirohydrochlorin. Finally, it catalyzes the ferrochelation of sirohydrochlorin to yield siroheme. This chain is Siroheme synthase, found in Bordetella pertussis (strain Tohama I / ATCC BAA-589 / NCTC 13251).